The following is a 238-amino-acid chain: Large ribosomal subunit protein uL2 (238 aa).

Residues 199 to 238 (PHGGGLHQSVSRSSTVARNTPPGRKVGHIAARRTGRRDRK) form a disordered region. Residues 206 to 216 (QSVSRSSTVAR) are compositionally biased toward polar residues. Basic residues predominate over residues 223–238 (KVGHIAARRTGRRDRK).

Belongs to the universal ribosomal protein uL2 family. In terms of assembly, part of the 50S ribosomal subunit. Forms a bridge to the 30S subunit in the 70S ribosome.

Its function is as follows. One of the primary rRNA binding proteins. Required for association of the 30S and 50S subunits to form the 70S ribosome, for tRNA binding and peptide bond formation. It has been suggested to have peptidyltransferase activity; this is somewhat controversial. Makes several contacts with the 16S rRNA in the 70S ribosome. In Metallosphaera sedula (strain ATCC 51363 / DSM 5348 / JCM 9185 / NBRC 15509 / TH2), this protein is Large ribosomal subunit protein uL2.